Reading from the N-terminus, the 256-residue chain is Pimeloyl-[acyl-carrier protein] methyl ester esterase (256 aa).

Residues 15–242 (HLVLLHGWGL…AAHAPFISHP (228 aa)) enclose the AB hydrolase-1 domain. Residues Trp-22, 82–83 (SL), and 143–147 (FLALQ) contribute to the substrate site. The active-site Nucleophile is Ser-82. Catalysis depends on residues Asp-207 and His-235. His-235 is a binding site for substrate.

This sequence belongs to the AB hydrolase superfamily. Carboxylesterase BioH family. Monomer.

The protein resides in the cytoplasm. It carries out the reaction 6-carboxyhexanoyl-[ACP] methyl ester + H2O = 6-carboxyhexanoyl-[ACP] + methanol + H(+). It participates in cofactor biosynthesis; biotin biosynthesis. The physiological role of BioH is to remove the methyl group introduced by BioC when the pimeloyl moiety is complete. It allows to synthesize pimeloyl-ACP via the fatty acid synthetic pathway through the hydrolysis of the ester bonds of pimeloyl-ACP esters. This is Pimeloyl-[acyl-carrier protein] methyl ester esterase from Escherichia coli O6:K15:H31 (strain 536 / UPEC).